The primary structure comprises 392 residues: Gastricsin (392 aa).

An N-terminal signal peptide occupies residues 1 to 16 (MKWMVVALLCLPLLEA). Residues 17–62 (ALIRVPLKKMKSIRETMKEQGVLKDFLKNHKYDPGQKYHFGKFGDY) constitute a propeptide, activation peptide. In terms of domain architecture, Peptidase A1 spans 76-389 (YYGEISIGTP…DMGNNRVGLA (314 aa)). Residue aspartate 94 is part of the active site. 2 disulfide bridges follow: cysteine 107/cysteine 112 and cysteine 270/cysteine 275. Residue aspartate 280 is part of the active site. Residues cysteine 314 and cysteine 347 are joined by a disulfide bond.

It belongs to the peptidase A1 family.

It is found in the secreted. The catalysed reaction is More restricted specificity than pepsin A, but shows preferential cleavage at Tyr-|-Xaa bonds. High activity on hemoglobin.. Hydrolyzes a variety of proteins. This is Gastricsin (Pgc) from Mus musculus (Mouse).